Here is a 437-residue protein sequence, read N- to C-terminus: MGTPGSGRKRTPVKDRFSAEDEALSNIAREAEARLAAKRAARAEARDIRMRELERQQRESSSKDITGTHWSRASTPKRRDMMYDSIKDRSSRVSSLLDEKSDKQYAENYTRPSSRNSASATTPLSGNSSRRGSGDTSSLIDPDTSLSELRESLSEVEEKYKKAMVSNAQLDNEKNNLIYQVDTLKDVIEEQEEQMAEFYRENEEKSKELERQKHMCSVLQHKMDELKEGLRQRDELIEKHGLVIIPESTPNGDVNHEPVVGAITAVSQEAAQVLESAGEGPLDVRLRKLAEEKDELLSQIRKLKLQLEEERQKCSRNDGMSGDLAGLQNGSDLQFIEMQRDANRQISEYKFKLSKAEQDIATLEQSISRLEGQVLRYKTAAENAEKIEDELKAEKRKLQRELRTAQDKIEEMEMTNSHLAKRLEKMKANRTALLAQQ.

The residue at position 18 (Ser-18) is a Phosphoserine. Positions 22–49 form a coiled coil; it reads EALSNIAREAEARLAAKRAARAEARDIR. Residues 33 to 62 are compositionally biased toward basic and acidic residues; sequence ARLAAKRAARAEARDIRMRELERQQRESSS. The segment at 33-152 is disordered; the sequence is ARLAAKRAAR…DTSLSELRES (120 aa). Residues 63 to 74 show a composition bias toward polar residues; sequence KDITGTHWSRAS. The segment covering 77-105 has biased composition (basic and acidic residues); it reads KRRDMMYDSIKDRSSRVSSLLDEKSDKQY. Residues 110–139 show a composition bias toward polar residues; the sequence is TRPSSRNSASATTPLSGNSSRRGSGDTSSL. Phosphoserine is present on residues Ser-114, Ser-117, Ser-125, Ser-129, and Ser-133. Position 136 is a phosphothreonine (Thr-136). Phosphoserine is present on residues Ser-137 and Ser-138. 2 coiled-coil regions span residues 143–239 and 282–430; these read DTSL…LIEK and LDVR…KANR.

The protein belongs to the LRRFIP family. As to quaternary structure, interacts with DVL3 and FLII. Weakly interacts with MYD88 in resting cells. Following LPS-stimulation, the interaction with MYD88 is rapidly enhanced; the complex gradually dissociates to basal levels after 6 hours of stimulation. Interaction with MYD88 is regulated by LPS-induced phosphorylation. In the presence of LPS, competes with FLII for MYD88-binding.

Its function is as follows. May function as activator of the canonical Wnt signaling pathway, in association with DVL3, upstream of CTNNB1/beta-catenin. Positively regulates Toll-like receptor (TLR) signaling in response to agonist probably by competing with the negative FLII regulator for MYD88-binding. This is Leucine-rich repeat flightless-interacting protein 2 (Lrrfip2) from Rattus norvegicus (Rat).